Consider the following 306-residue polypeptide: Pantothenate synthetase (306 aa).

37–44 (MGALHEGH) contributes to the ATP binding site. The Proton donor role is filled by histidine 44. (R)-pantoate is bound at residue glutamine 69. Glutamine 69 serves as a coordination point for beta-alanine. 155–158 (GEKD) provides a ligand contact to ATP. Residue glutamine 161 coordinates (R)-pantoate. Residues valine 184 and 192-195 (KSSR) contribute to the ATP site.

This sequence belongs to the pantothenate synthetase family. As to quaternary structure, homodimer.

Its subcellular location is the cytoplasm. It catalyses the reaction (R)-pantoate + beta-alanine + ATP = (R)-pantothenate + AMP + diphosphate + H(+). It participates in cofactor biosynthesis; (R)-pantothenate biosynthesis; (R)-pantothenate from (R)-pantoate and beta-alanine: step 1/1. Its function is as follows. Catalyzes the condensation of pantoate with beta-alanine in an ATP-dependent reaction via a pantoyl-adenylate intermediate. The protein is Pantothenate synthetase of Corynebacterium jeikeium (strain K411).